Consider the following 494-residue polypeptide: UDP-N-acetylmuramoyl-L-alanyl-D-glutamate--L-lysine ligase (494 aa).

S30 contacts UDP-N-acetyl-alpha-D-muramoyl-L-alanyl-D-glutamate. 110-116 (GTNGKTS) is an ATP binding site. UDP-N-acetyl-alpha-D-muramoyl-L-alanyl-D-glutamate is bound by residues 152-153 (TT), S179, and R187. Position 219 is an N6-carboxylysine (K219). Positions 406–409 (DNPA) match the L-lysine recognition motif motif.

This sequence belongs to the MurCDEF family. MurE subfamily. In terms of processing, carboxylation is probably crucial for Mg(2+) binding and, consequently, for the gamma-phosphate positioning of ATP.

The protein resides in the cytoplasm. The enzyme catalyses UDP-N-acetyl-alpha-D-muramoyl-L-alanyl-D-glutamate + L-lysine + ATP = UDP-N-acetyl-alpha-D-muramoyl-L-alanyl-gamma-D-glutamyl-L-lysine + ADP + phosphate + H(+). It participates in cell wall biogenesis; peptidoglycan biosynthesis. In terms of biological role, catalyzes the addition of L-lysine to the nucleotide precursor UDP-N-acetylmuramoyl-L-alanyl-D-glutamate (UMAG) in the biosynthesis of bacterial cell-wall peptidoglycan. This is UDP-N-acetylmuramoyl-L-alanyl-D-glutamate--L-lysine ligase from Staphylococcus aureus (strain bovine RF122 / ET3-1).